The primary structure comprises 503 residues: Maturase K (503 aa).

This sequence belongs to the intron maturase 2 family. MatK subfamily.

It is found in the plastid. The protein resides in the chloroplast. Its function is as follows. Usually encoded in the trnK tRNA gene intron. Probably assists in splicing its own and other chloroplast group II introns. This is Maturase K from Cercocarpus betuloides (Mountain mahogany).